We begin with the raw amino-acid sequence, 447 residues long: MAEPPKLRVLMVSDFFFPNFGGVENHIYYLSQCLLKLGHKVVVMTHAYGNRSGVRYMTGGLKVYYVPWRPFVMQTTFPTVYGTLPIVRTILRREKITVVHGHQAFSTLCHEALMHARTMGYKVVFTDHSLYGFADVGSIHMNKVLQFSLADIDQAICVSHTSKENTVLRSGLSPAKVFMIPNAVDTAMFKPASVRPSTDIITIVVISRLVYRKGADLLVEVIPEVCRLYPNVRFVVGGDGPKHVRLEEMREKHSLQDRVEMLGAVPHSRVRSVLVTGHIFLNSSLTEAFCIAILEAASCGLLTVSTRVGGVPEVLPDDMVVLAEPDPDDMVRAIEKAISILPTINPEEMHNRMKKLYSWQDVAKRTEIVYDRALKCSNRSLLERLMRFLSCGAWAGKLFCMVMILDYLLWRLLQLLQPDEDIEEAPDICLCHHRGVEVSEGLRKKIK.

The Cytoplasmic portion of the chain corresponds to 1 to 387; the sequence is MAEPPKLRVL…NRSLLERLMR (387 aa). Residues 388-408 traverse the membrane as a helical segment; sequence FLSCGAWAGKLFCMVMILDYL. The Lumenal portion of the chain corresponds to 409 to 447; that stretch reads LWRLLQLLQPDEDIEEAPDICLCHHRGVEVSEGLRKKIK.

This sequence belongs to the glycosyltransferase group 1 family. Glycosyltransferase 4 subfamily. In terms of tissue distribution, expressed in roots, stems, leaves, flowers and pollen grains.

The protein resides in the endoplasmic reticulum membrane. The enzyme catalyses a 1,2-diacyl-sn-glycero-3-phospho-(1D-myo-inositol) + UDP-N-acetyl-alpha-D-glucosamine = a 6-(N-acetyl-alpha-D-glucosaminyl)-1-(1,2-diacyl-sn-glycero-3-phospho)-1D-myo-inositol + UDP + H(+). Its pathway is glycolipid biosynthesis; glycosylphosphatidylinositol-anchor biosynthesis. Functionally, necessary for the synthesis of N-acetylglucosaminyl-phosphatidylinositol, the very early intermediate in GPI-anchor biosynthesis. Required for pollen germination and pollen tube growth. This chain is Phosphatidylinositol N-acetylglucosaminyltransferase subunit A, found in Arabidopsis thaliana (Mouse-ear cress).